A 245-amino-acid chain; its full sequence is 4-hydroxy-tetrahydrodipicolinate reductase (245 aa).

NAD(+) is bound by residues 7 to 12 (GAKGKV), 75 to 77 (GTT), and 102 to 105 (APNF). Histidine 132 functions as the Proton donor/acceptor in the catalytic mechanism. Histidine 133 is a binding site for (S)-2,3,4,5-tetrahydrodipicolinate. Lysine 136 acts as the Proton donor in catalysis. (S)-2,3,4,5-tetrahydrodipicolinate is bound at residue 142–143 (GT).

It belongs to the DapB family.

Its subcellular location is the cytoplasm. It carries out the reaction (S)-2,3,4,5-tetrahydrodipicolinate + NAD(+) + H2O = (2S,4S)-4-hydroxy-2,3,4,5-tetrahydrodipicolinate + NADH + H(+). The enzyme catalyses (S)-2,3,4,5-tetrahydrodipicolinate + NADP(+) + H2O = (2S,4S)-4-hydroxy-2,3,4,5-tetrahydrodipicolinate + NADPH + H(+). The protein operates within amino-acid biosynthesis; L-lysine biosynthesis via DAP pathway; (S)-tetrahydrodipicolinate from L-aspartate: step 4/4. Catalyzes the conversion of 4-hydroxy-tetrahydrodipicolinate (HTPA) to tetrahydrodipicolinate. This Mycobacterium marinum (strain ATCC BAA-535 / M) protein is 4-hydroxy-tetrahydrodipicolinate reductase.